A 909-amino-acid chain; its full sequence is Protein translocase subunit SecA (909 aa).

ATP contacts are provided by residues glutamine 87, 105 to 109, and aspartate 507; that span reads GEGKT. The segment at 857-909 is disordered; it reads DTHSELAEEQPPVAENRENKQQPFVRKNEKVGRNDPCPCGSGKKYKQCHGKLN. Residues 871-889 show a composition bias toward basic and acidic residues; it reads ENRENKQQPFVRKNEKVGR. Residues cysteine 893, cysteine 895, cysteine 904, and histidine 905 each contribute to the Zn(2+) site. The segment covering 899-909 has biased composition (basic residues); sequence KKYKQCHGKLN.

This sequence belongs to the SecA family. In terms of assembly, monomer and homodimer. Part of the essential Sec protein translocation apparatus which comprises SecA, SecYEG and auxiliary proteins SecDF-YajC and YidC. The cofactor is Zn(2+).

Its subcellular location is the cell inner membrane. It is found in the cytoplasm. It carries out the reaction ATP + H2O + cellular proteinSide 1 = ADP + phosphate + cellular proteinSide 2.. Its function is as follows. Part of the Sec protein translocase complex. Interacts with the SecYEG preprotein conducting channel. Has a central role in coupling the hydrolysis of ATP to the transfer of proteins into and across the cell membrane, serving both as a receptor for the preprotein-SecB complex and as an ATP-driven molecular motor driving the stepwise translocation of polypeptide chains across the membrane. This chain is Protein translocase subunit SecA, found in Nitrosomonas europaea (strain ATCC 19718 / CIP 103999 / KCTC 2705 / NBRC 14298).